An 86-amino-acid polypeptide reads, in one-letter code: Small ribosomal subunit protein bS16 (86 aa).

The protein belongs to the bacterial ribosomal protein bS16 family.

This chain is Small ribosomal subunit protein bS16, found in Stenotrophomonas maltophilia (strain K279a).